Here is a 336-residue protein sequence, read N- to C-terminus: Aspartate--ammonia ligase (336 aa).

Belongs to the class-II aminoacyl-tRNA synthetase family. AsnA subfamily.

Its subcellular location is the cytoplasm. It carries out the reaction L-aspartate + NH4(+) + ATP = L-asparagine + AMP + diphosphate + H(+). The protein operates within amino-acid biosynthesis; L-asparagine biosynthesis; L-asparagine from L-aspartate (ammonia route): step 1/1. The sequence is that of Aspartate--ammonia ligase from Clostridium perfringens (strain SM101 / Type A).